The following is a 231-amino-acid chain: Cytochrome c oxidase subunit 2 (231 aa).

The Mitochondrial intermembrane segment spans residues 1-14 (MAHPAQLGLQNATS). A helical transmembrane segment spans residues 15–45 (PIMEELIAFHDHALMIIFLISSLVLYVISLM). At 46–59 (LTTKLTHTSTMNAQ) the chain is on the mitochondrial matrix side. The helical transmembrane segment at 60–87 (EIEMIWTILPAIILIMIALPSLRILYMT) threads the bilayer. Residues 88 to 231 (DEFNKPYLTL…WASYLYIVSL (144 aa)) lie on the Mitochondrial intermembrane side of the membrane. Cu cation-binding residues include H161, C196, E198, C200, H204, and M207. Position 198 (E198) interacts with Mg(2+).

The protein belongs to the cytochrome c oxidase subunit 2 family. As to quaternary structure, component of the cytochrome c oxidase (complex IV, CIV), a multisubunit enzyme composed of 14 subunits. The complex is composed of a catalytic core of 3 subunits MT-CO1, MT-CO2 and MT-CO3, encoded in the mitochondrial DNA, and 11 supernumerary subunits COX4I, COX5A, COX5B, COX6A, COX6B, COX6C, COX7A, COX7B, COX7C, COX8 and NDUFA4, which are encoded in the nuclear genome. The complex exists as a monomer or a dimer and forms supercomplexes (SCs) in the inner mitochondrial membrane with NADH-ubiquinone oxidoreductase (complex I, CI) and ubiquinol-cytochrome c oxidoreductase (cytochrome b-c1 complex, complex III, CIII), resulting in different assemblies (supercomplex SCI(1)III(2)IV(1) and megacomplex MCI(2)III(2)IV(2)). Found in a complex with TMEM177, COA6, COX18, COX20, SCO1 and SCO2. Interacts with TMEM177 in a COX20-dependent manner. Interacts with COX20. Interacts with COX16. Cu cation is required as a cofactor.

The protein resides in the mitochondrion inner membrane. The enzyme catalyses 4 Fe(II)-[cytochrome c] + O2 + 8 H(+)(in) = 4 Fe(III)-[cytochrome c] + 2 H2O + 4 H(+)(out). Functionally, component of the cytochrome c oxidase, the last enzyme in the mitochondrial electron transport chain which drives oxidative phosphorylation. The respiratory chain contains 3 multisubunit complexes succinate dehydrogenase (complex II, CII), ubiquinol-cytochrome c oxidoreductase (cytochrome b-c1 complex, complex III, CIII) and cytochrome c oxidase (complex IV, CIV), that cooperate to transfer electrons derived from NADH and succinate to molecular oxygen, creating an electrochemical gradient over the inner membrane that drives transmembrane transport and the ATP synthase. Cytochrome c oxidase is the component of the respiratory chain that catalyzes the reduction of oxygen to water. Electrons originating from reduced cytochrome c in the intermembrane space (IMS) are transferred via the dinuclear copper A center (CU(A)) of subunit 2 and heme A of subunit 1 to the active site in subunit 1, a binuclear center (BNC) formed by heme A3 and copper B (CU(B)). The BNC reduces molecular oxygen to 2 water molecules using 4 electrons from cytochrome c in the IMS and 4 protons from the mitochondrial matrix. The sequence is that of Cytochrome c oxidase subunit 2 (MT-CO2) from Alouatta palliata (Mantled howler monkey).